Reading from the N-terminus, the 94-residue chain is Large ribosomal subunit protein uL23 (94 aa).

This sequence belongs to the universal ribosomal protein uL23 family. Part of the 50S ribosomal subunit. Contacts protein L29, and trigger factor when it is bound to the ribosome.

Its function is as follows. One of the early assembly proteins it binds 23S rRNA. One of the proteins that surrounds the polypeptide exit tunnel on the outside of the ribosome. Forms the main docking site for trigger factor binding to the ribosome. This chain is Large ribosomal subunit protein uL23, found in Trichlorobacter lovleyi (strain ATCC BAA-1151 / DSM 17278 / SZ) (Geobacter lovleyi).